We begin with the raw amino-acid sequence, 284 residues long: Polyamine aminopropyltransferase (284 aa).

The PABS domain occupies 4-238 (EVWNTERLHD…GPMALGWGSH (235 aa)). Q33 contributes to the S-methyl-5'-thioadenosine binding site. Spermidine is bound by residues H64 and D88. S-methyl-5'-thioadenosine contacts are provided by residues E108 and 140-141 (DG). The active-site Proton acceptor is D158. 158–161 (DSTD) contacts spermidine. P165 is an S-methyl-5'-thioadenosine binding site.

Belongs to the spermidine/spermine synthase family. As to quaternary structure, homodimer or homotetramer.

The protein localises to the cytoplasm. It catalyses the reaction S-adenosyl 3-(methylsulfanyl)propylamine + putrescine = S-methyl-5'-thioadenosine + spermidine + H(+). Its pathway is amine and polyamine biosynthesis; spermidine biosynthesis; spermidine from putrescine: step 1/1. Its function is as follows. Catalyzes the irreversible transfer of a propylamine group from the amino donor S-adenosylmethioninamine (decarboxy-AdoMet) to putrescine (1,4-diaminobutane) to yield spermidine. The protein is Polyamine aminopropyltransferase of Ruegeria sp. (strain TM1040) (Silicibacter sp.).